Reading from the N-terminus, the 56-residue chain is Protein p56 (56 aa).

It belongs to the phi29likevirus protein p56 family. As to quaternary structure, homodimer. Interacts with host UDG; this interaction inhibits the uracil-DNA glycosylase.

Its function is as follows. Inhibits the host uracil-DNA glycosylase (UDG), an enzyme which removes uracil residues from DNA by the base excision repair. Interacts with host uracil-DNA glycosylase and prevents the latter from binding to DNA. Since the viral DNA polymerase efficiently incorporates dUMP into DNA, the virus needs to prevent the deleterious effect caused by host UDG when it eliminates uracil residues present in the viral genome. The sequence is that of Protein p56 (1B) from Bacillus phage PZA (Bacteriophage PZA).